The following is a 160-amino-acid chain: MGFSHITHLDLKRFAGLSQRTSNALEMTEERRIPALWDQLWKQDMSALLSQAEKDKSIIALYSNYEQETNGFYTFSVGTFQEYDDILPGPYENIDLPASAYAVFTSRIGPIEEIVLETWKEIWTWDKRHLRTFTGDFEMYDQNAAVPQRAQVNIYVAIKK.

In Bacillus subtilis (strain 168), this protein is Putative transcriptional regulator protein YobU (yobU).